We begin with the raw amino-acid sequence, 304 residues long: Protease HtpX homolog (304 aa).

2 helical membrane-spanning segments follow: residues 14-34 (IFIILGFFIFVLMVGAAIGII) and 39-59 (YLNGLVLAAVIGAFYILIMVM). Residue His144 coordinates Zn(2+). Glu145 is a catalytic residue. Residue His148 coordinates Zn(2+). 2 helical membrane-spanning segments follow: residues 159–179 (IAIALVAVIAILSDIAMRMIF) and 202–222 (AIIYIVALIFVILAPIIATAI). Glu231 is a binding site for Zn(2+).

It belongs to the peptidase M48B family. The cofactor is Zn(2+).

It localises to the cell membrane. This chain is Protease HtpX homolog, found in Listeria monocytogenes serovar 1/2a (strain ATCC BAA-679 / EGD-e).